We begin with the raw amino-acid sequence, 395 residues long: Choline/ethanolamine kinase (395 aa).

An N-acetylalanine modification is found at alanine 2. Residues 75–81 (SGGLSNL), arginine 104, 146–152 (QYIPSRP), glutamine 244, and aspartate 264 each bind ATP. 77 to 79 (GLS) contributes to the phosphocholine binding site.

It belongs to the choline/ethanolamine kinase family. In terms of assembly, homodimer, and heterodimer with CHKA.

The enzyme catalyses choline + ATP = phosphocholine + ADP + H(+). The catalysed reaction is ethanolamine + ATP = phosphoethanolamine + ADP + H(+). It participates in phospholipid metabolism; phosphatidylethanolamine biosynthesis; phosphatidylethanolamine from ethanolamine: step 1/3. In terms of biological role, has a key role in phospholipid metabolism, and catalyzes the first step of phosphatidylethanolamine and phosphatidylcholine biosynthesis. The chain is Choline/ethanolamine kinase (CHKB) from Homo sapiens (Human).